The sequence spans 703 residues: Zinc finger protein 750 (703 aa).

The segment at 25–51 (YKCFQCPFTCNEKSHLFNHMKYGLCKN) adopts a CCHC-type zinc-finger fold. Residues cysteine 27, cysteine 30, histidine 43, and cysteine 49 each coordinate Zn(2+). Disordered regions lie at residues 64–113 (KCPK…DAKE), 350–527 (PASS…YGPM), 553–614 (WAPR…KQTA), and 630–703 (RVAD…TRVS). Residues 67 to 106 (KSSSLDPKQTHQPEPTSKPATSKSLLNGLSSFDPKSQQGS) are compositionally biased toward polar residues. Positions 352-361 (SSPSELNLSS) are enriched in low complexity. Basic and acidic residues predominate over residues 367–394 (TECEKGSPVPEAKDPSKDGQRDAEEAKM). Composition is skewed to polar residues over residues 410–421 (SPTNFTQTSQTF) and 456–477 (GSES…SLQA). Basic and acidic residues predominate over residues 574–611 (TETKGSEDRTSRVETPQDKAHSRTTPDVHTEDSSDEQK). Positions 639–655 (QEPTRQDVPTLSATENL) are enriched in polar residues.

The protein localises to the nucleus. Its function is as follows. Transcription factor involved in epidermis differentiation. Required for terminal epidermal differentiation: acts downstream of p63/TP63 and activates expression of late epidermal differentiation genes. Specifically binds to the promoter of KLF4 and promotes its expression. The chain is Zinc finger protein 750 (Znf750) from Mus musculus (Mouse).